Here is a 113-residue protein sequence, read N- to C-terminus: Hydrogenase maturation factor HybF (113 aa).

Ni(2+) is bound by residues His-2 and Glu-3. 4 residues coordinate Zn(2+): Cys-73, Cys-76, Cys-89, and Cys-92.

It belongs to the HypA/HybF family. HybF subfamily.

In terms of biological role, involved in the maturation of [NiFe] hydrogenases. Required for nickel insertion into the metal center of the hydrogenase. The sequence is that of Hydrogenase maturation factor HybF from Escherichia coli O6:H1 (strain CFT073 / ATCC 700928 / UPEC).